A 239-amino-acid chain; its full sequence is DNA repair protein RecO (239 aa).

This sequence belongs to the RecO family.

Functionally, involved in DNA repair and RecF pathway recombination. The protein is DNA repair protein RecO of Stenotrophomonas maltophilia (strain K279a).